The chain runs to 741 residues: MDESFNSILEPENAWLFLFDDVSQLQQLPIVQNNQENFINSIDFNTGDVTTTNISGLNFQSLEESLNSDTSIENKPQIIEQIQFLQQQQQQQHDQIQQQLHNFQQQYQQQYQQRQQQYQQQYQKPYTPPSFIYSEKNDLVPQQQFHLGQENLQQPPQSLQQQQQPPSPSSPPQQQQQPQQQLQQLQQQHQQHQQHQQQPQFQQLPIQHELPQQSQLQHIQIQSQQIPTQPQPQQIQKQIQIEQPQVQVQQQIQPQQQIQPQQHIQLQQHIQLQQPQIQQQQLPPQTIQQKEINKKNQSKQSSNSMPLSQQIFFNTPKLDQHLLSYFQTQKTNNTINTLNVDQKRDNIEKQKENTSPPTPSSPVPTIINSNSTDINQISPSQQQQQQQQQQQQTTDINKILTLQQLEQQQLEYQKQQQQQQQFNLTFDDESKKSIKRINQNIANRNFRQRKKDHIKDIEDKMMELTLENEKLKKENESIRQQEHEGGTMAILKPSPEKKQLMLEIRSIVRQIGEALKEDNEKNLIYLLHMYHGAVAKRYSSIDKDAEQIASPEIQLRLASIGYVLKSTPFLTNIFQGIESDSWFNLFKEKANITSQQSVQLDIIREKYCEYNLKLLDEIHDLDSEVKKFFFQNIFVFQSYSISLKTSKPLDLSQQIEFACKLKLLKNKFFENSCLMFETFSSLSKILTPKQEALLLVEIDIFSCFNLKKFEMITNVWANKSKMKKSSDPFKIGDLSQIFEKP.

A coiled-coil region spans residues 77–117; that stretch reads QIIEQIQFLQQQQQQQHDQIQQQLHNFQQQYQQQYQQRQQQ. 4 stretches are compositionally biased toward low complexity: residues 153-164, 172-237, 277-290, and 381-390; these read QQPPQSLQQQQQ, PQQQ…QIQK, IQQQ…IQQK, and QQQQQQQQQQ. 3 disordered regions span residues 153–237, 277–305, and 349–390; these read QQPP…QIQK, IQQQ…SNSM, and KQKE…QQQQ. The bZIP domain occupies 429–492; that stretch reads ESKKSIKRIN…HEGGTMAILK (64 aa). The interval 431–432 is basic motif; sequence KK. The tract at residues 434-441 is leucine-zipper; that stretch reads IKRINQNI.

This sequence belongs to the bZIP family.

It is found in the nucleus. Probable transcriptional regulator. This is Probable basic-leucine zipper transcription factor I (bzpI) from Dictyostelium discoideum (Social amoeba).